The following is a 134-amino-acid chain: ATP synthase epsilon chain (134 aa).

Belongs to the ATPase epsilon chain family. In terms of assembly, F-type ATPases have 2 components, CF(1) - the catalytic core - and CF(0) - the membrane proton channel. CF(1) has five subunits: alpha(3), beta(3), gamma(1), delta(1), epsilon(1). CF(0) has three main subunits: a, b and c.

Its subcellular location is the cell inner membrane. Produces ATP from ADP in the presence of a proton gradient across the membrane. The polypeptide is ATP synthase epsilon chain (Sinorhizobium fredii (strain NBRC 101917 / NGR234)).